The chain runs to 111 residues: Inner membrane protein YdgC (111 aa).

Topologically, residues 1–26 are cytoplasmic; that stretch reads MGLVIKAALGALVVLLIGVLAKTKNY. A helical membrane pass occupies residues 27–47; that stretch reads YIAGLIPLFPTFALIAHYIVA. Over 48-58 the chain is Periplasmic; it reads SERGIEALRAT. Residues 59–79 traverse the membrane as a helical segment; the sequence is IIFSMWSIIPYFVYLVSLWYF. The Cytoplasmic portion of the chain corresponds to 80–87; it reads TGMMRLPA. Residues 88 to 108 form a helical membrane-spanning segment; the sequence is AFVGSVACWGISAWVLIICWI. Residues 109–111 lie on the Periplasmic side of the membrane; that stretch reads KLH.

To P.aeruginosa GlpM.

The protein localises to the cell inner membrane. In Escherichia coli O157:H7, this protein is Inner membrane protein YdgC (ydgC).